The chain runs to 131 residues: Glycine cleavage system H protein (131 aa).

The Lipoyl-binding domain maps to 24–106 (TVRVGITDYA…YGEGWLVELQ (83 aa)). Lysine 65 carries the N6-lipoyllysine modification.

It belongs to the GcvH family. In terms of assembly, the glycine cleavage system is composed of four proteins: P, T, L and H. The cofactor is (R)-lipoate.

Functionally, the glycine cleavage system catalyzes the degradation of glycine. The H protein shuttles the methylamine group of glycine from the P protein to the T protein. The protein is Glycine cleavage system H protein of Mycolicibacterium vanbaalenii (strain DSM 7251 / JCM 13017 / BCRC 16820 / KCTC 9966 / NRRL B-24157 / PYR-1) (Mycobacterium vanbaalenii).